Here is a 208-residue protein sequence, read N- to C-terminus: Dual specificity protein phosphatase 22-A (208 aa).

One can recognise a Tyrosine-protein phosphatase domain in the interval 4-144 (GMNKVIDGLY…LQEFQMKQVS (141 aa)). The Phosphocysteine intermediate role is filled by Cys-88.

The protein belongs to the protein-tyrosine phosphatase family. Non-receptor class dual specificity subfamily.

It is found in the cytoplasm. The protein resides in the nucleus. The enzyme catalyses O-phospho-L-tyrosyl-[protein] + H2O = L-tyrosyl-[protein] + phosphate. It catalyses the reaction O-phospho-L-seryl-[protein] + H2O = L-seryl-[protein] + phosphate. The catalysed reaction is O-phospho-L-threonyl-[protein] + H2O = L-threonyl-[protein] + phosphate. Activates the Jnk signaling pathway. Dephosphorylates and deactivates p38 and stress-activated protein kinase/c-Jun N-terminal kinase (SAPK/JNK). This Danio rerio (Zebrafish) protein is Dual specificity protein phosphatase 22-A.